Here is a 141-residue protein sequence, read N- to C-terminus: Actin-depolymerizing factor 9 (141 aa).

At S8 the chain carries Phosphoserine. The ADF-H domain maps to 8–141; the sequence is SGMWMTDDCK…GFDKIQDRAK (134 aa).

It belongs to the actin-binding proteins ADF family.

It localises to the cytoplasm. The protein localises to the cytoskeleton. Does not display typical F-actin depolymerizing activity. Exhibits a high ability to stabilize and cross-link actin filaments. Functions as an actin bundling protein with the highest efficiency under acidic conditions. May play a role in the modulation of levels of histone H3 lysine 4 trimethylation and H3 lysine 9 and 14 acetylation at the FLC locus. The sequence is that of Actin-depolymerizing factor 9 (ADF9) from Arabidopsis thaliana (Mouse-ear cress).